A 336-amino-acid polypeptide reads, in one-letter code: Nucleoid-associated protein Spro_3255 (336 aa).

The protein belongs to the YejK family.

The protein resides in the cytoplasm. It is found in the nucleoid. In Serratia proteamaculans (strain 568), this protein is Nucleoid-associated protein Spro_3255.